The following is a 150-amino-acid chain: D-aminoacyl-tRNA deacylase (150 aa).

The Gly-cisPro motif, important for rejection of L-amino acids signature appears at 138 to 139 (GP).

It belongs to the DTD family. Homodimer.

The protein localises to the cytoplasm. It carries out the reaction glycyl-tRNA(Ala) + H2O = tRNA(Ala) + glycine + H(+). The enzyme catalyses a D-aminoacyl-tRNA + H2O = a tRNA + a D-alpha-amino acid + H(+). Its function is as follows. An aminoacyl-tRNA editing enzyme that deacylates mischarged D-aminoacyl-tRNAs. Also deacylates mischarged glycyl-tRNA(Ala), protecting cells against glycine mischarging by AlaRS. Acts via tRNA-based rather than protein-based catalysis; rejects L-amino acids rather than detecting D-amino acids in the active site. By recycling D-aminoacyl-tRNA to D-amino acids and free tRNA molecules, this enzyme counteracts the toxicity associated with the formation of D-aminoacyl-tRNA entities in vivo and helps enforce protein L-homochirality. This is D-aminoacyl-tRNA deacylase from Christiangramia forsetii (strain DSM 17595 / CGMCC 1.15422 / KT0803) (Gramella forsetii).